The primary structure comprises 952 residues: Lysosomal alpha-glucosidase (952 aa).

Positions 1–27 (MGVRHPPCSHRLLAVCALVSLATAALL) are cleaved as a signal peptide. The propeptide occupies 28-69 (GHILLHDFLLVPRELSGSSPVLEETHPAHQQGASRPGPRDAQ). The interval 47–82 (PVLEETHPAHQQGASRPGPRDAQAHPGRPRAVPTQC) is disordered. A P-type domain is found at 80–131 (TQCDVPPNSRFDCAPDKAITQEQCEARGCCYIPAKQGLQGAQMGQPWCFFPP). 3 cysteine pairs are disulfide-bonded: C82–C109, C92–C108, and C103–C127. Residues N140, N233, and N390 are each glycosylated (N-linked (GlcNAc...) asparagine). Residue D404 coordinates substrate. Residue N470 is glycosylated (N-linked (GlcNAc...) asparagine). D518 functions as the Nucleophile in the catalytic mechanism. E521 is an active-site residue. C533 and C558 are disulfide-bonded. Residues R600 and D616 each coordinate substrate. C647 and C658 are disulfide-bonded. The N-linked (GlcNAc...) asparagine glycan is linked to N652. Residue H674 coordinates substrate. N882 and N925 each carry an N-linked (GlcNAc...) asparagine glycan.

The protein belongs to the glycosyl hydrolase 31 family. The different forms of acid glucosidase are obtained by proteolytic processing. In terms of processing, phosphorylation of mannose residues ensures efficient transport of the enzyme to the lysosomes via the mannose 6-phosphate receptor.

The protein localises to the lysosome. The protein resides in the lysosome membrane. It catalyses the reaction Hydrolysis of terminal, non-reducing (1-&gt;4)-linked alpha-D-glucose residues with release of alpha-D-glucose.. In terms of biological role, essential for the degradation of glycogen in lysosomes. Has highest activity on alpha-1,4-linked glycosidic linkages, but can also hydrolyze alpha-1,6-linked glucans. The polypeptide is Lysosomal alpha-glucosidase (GAA) (Homo sapiens (Human)).